The chain runs to 371 residues: Opine oxidase subunit B (371 aa).

Heterodimer of a subunit A and a subunit B.

The protein operates within opine metabolism; octopine degradation. Oxidative cleavage of octopine into L-arginine and pyruvate. The sequence is that of Opine oxidase subunit B (ooxB) from Rhizobium meliloti (Ensifer meliloti).